We begin with the raw amino-acid sequence, 459 residues long: Putrescine aminotransferase (459 aa).

Pyridoxal 5'-phosphate-binding positions include 150-151 and Gln-274; that span reads GT. Lys-300 is modified (N6-(pyridoxal phosphate)lysine). Position 332 (Thr-332) interacts with pyridoxal 5'-phosphate.

The protein belongs to the class-III pyridoxal-phosphate-dependent aminotransferase family. Putrescine aminotransferase subfamily. It depends on pyridoxal 5'-phosphate as a cofactor.

It catalyses the reaction an alkane-alpha,omega-diamine + 2-oxoglutarate = an omega-aminoaldehyde + L-glutamate. The enzyme catalyses putrescine + 2-oxoglutarate = 1-pyrroline + L-glutamate + H2O. The catalysed reaction is cadaverine + 2-oxoglutarate = 5-aminopentanal + L-glutamate. The protein operates within amine and polyamine degradation; putrescine degradation; 4-aminobutanal from putrescine (transaminase route): step 1/1. Functionally, catalyzes the aminotransferase reaction from putrescine to 2-oxoglutarate, leading to glutamate and 4-aminobutanal, which spontaneously cyclizes to form 1-pyrroline. This is the first step in one of two pathways for putrescine degradation, where putrescine is converted into 4-aminobutanoate (gamma-aminobutyrate or GABA) via 4-aminobutanal. Also functions as a cadaverine transaminase in a a L-lysine degradation pathway to succinate that proceeds via cadaverine, glutarate and L-2-hydroxyglutarate. The polypeptide is Putrescine aminotransferase (Klebsiella pneumoniae subsp. pneumoniae (strain ATCC 700721 / MGH 78578)).